A 227-amino-acid polypeptide reads, in one-letter code: Probable septum site-determining protein MinC (227 aa).

Belongs to the MinC family. As to quaternary structure, interacts with MinD and FtsZ.

In terms of biological role, cell division inhibitor that blocks the formation of polar Z ring septums. Rapidly oscillates between the poles of the cell to destabilize FtsZ filaments that have formed before they mature into polar Z rings. Prevents FtsZ polymerization. In Geobacillus thermodenitrificans (strain NG80-2), this protein is Probable septum site-determining protein MinC.